A 536-amino-acid chain; its full sequence is Proto-oncogene tyrosine-protein kinase Yrk (536 aa).

The N-myristoyl glycine moiety is linked to residue Gly2. Residues Cys3 and Cys6 are each lipidated (S-palmitoyl cysteine). The segment at 10–36 is disordered; the sequence is ISGKGQGGSGTGTPAHPPSQYDPDPTQ. Residues 81 to 142 enclose the SH3 domain; that stretch reads GGVTLFIALY…PSNYVAPVDS (62 aa). The SH2 domain occupies 148–245; it reads WYFGKIGRKD…GLCCRLAVPC (98 aa). The 254-residue stretch at 270 to 523 folds into the Protein kinase domain; the sequence is LQLLQKLGNG…YLQSFLEDYF (254 aa). Residues 276-284 and Lys298 contribute to the ATP site; that span reads LGNGQFGEV. The active-site Proton acceptor is Asp389. Tyr419 is modified (phosphotyrosine; by autocatalysis). Tyr530 is modified (phosphotyrosine).

It belongs to the protein kinase superfamily. Tyr protein kinase family. SRC subfamily. In terms of processing, phosphorylated. In terms of tissue distribution, there are elevated levels of this protein in neural and hematopoietic tissues.

The catalysed reaction is L-tyrosyl-[protein] + ATP = O-phospho-L-tyrosyl-[protein] + ADP + H(+). Its function is as follows. May participate in signaling pathways. This is Proto-oncogene tyrosine-protein kinase Yrk (YRK) from Gallus gallus (Chicken).